We begin with the raw amino-acid sequence, 402 residues long: D-mannonate dehydratase (402 aa).

The substrate site is built by Asn37 and His122. Residue Tyr159 is the Proton donor/acceptor of the active site. Residue Asp210 coordinates Mg(2+). The Proton donor/acceptor role is filled by His212. Positions 236 and 262 each coordinate Mg(2+). Substrate-binding residues include Glu262, Arg283, His312, Asp316, and Glu339.

This sequence belongs to the mandelate racemase/muconate lactonizing enzyme family. GalD subfamily. It depends on Mg(2+) as a cofactor.

The catalysed reaction is D-mannonate = 2-dehydro-3-deoxy-D-gluconate + H2O. It functions in the pathway carbohydrate metabolism; pentose and glucuronate interconversion. Catalyzes the dehydration of D-mannonate. Has no detectable activity with a panel of 70 other acid sugars (in vitro). This chain is D-mannonate dehydratase, found in Rhizorhabdus wittichii (strain DSM 6014 / CCUG 31198 / JCM 15750 / NBRC 105917 / EY 4224 / RW1) (Sphingomonas wittichii).